The sequence spans 333 residues: Dioxygenase cnsJ (333 aa).

Residues His-153, Asp-155, and His-235 each coordinate Fe cation. The interval 309-333 is disordered; it reads NAQPEGEDDGGMKPNEGEHVVEAQI. Residues 323–333 show a composition bias toward basic and acidic residues; the sequence is NEGEHVVEAQI.

This sequence belongs to the PhyH family. As to quaternary structure, homodimer. Fe cation serves as cofactor.

The protein operates within alkaloid biosynthesis. Functionally, dioxygenase; part of the gene cluster that mediates the biosynthesis of communesins, a prominent class of indole alkaloids with great potential as pharmaceuticals. Communesins are biosynthesized by the coupling of tryptamine and aurantioclavine, two building blocks derived from L-tryptophan. The L-tryptophan decarboxylase cnsB converts L-tryptophan to tryptamine, whereas the tryptophan dimethylallyltransferase cnsF converts L-tryptophan to 4-dimethylallyl tryptophan which is further transformed to aurantioclavine by the aurantioclavine synthase cnsA, probably aided by the catalase cnsD. The cytochrome P450 monooxygenase cnsC catalyzes the heterodimeric coupling between the two different indole moieties, tryptamine and aurantioclavine, to construct vicinal quaternary stereocenters and yield the heptacyclic communesin scaffold. The O-methyltransferase cnsE then methylates the communesin scaffold to produce communesin K, the simplest characterized communesin that contains the heptacyclic core. The dioxygenase cnsJ converts communesin K into communesin I. Acylation to introduce the hexadienyl group at position N16 of communesin I by the acyltransferase cnsK leads to the production of communesin B. The hexadienyl group is produced by the highly reducing polyketide synthase cnsI, before being hydrolytically removed from cnsI by the serine hydrolase cnsH, converted into hexadienyl-CoA by the CoA ligase cnsG, and then transferred to communesin I by cnsK. Surprisingly, cnsK may also be a promiscuous acyltransferase that can tolerate a range of acyl groups, including acetyl-, propionyl-, and butyryl-CoA, which lead to communesins A, G and H respectively. The roles of the alpha-ketoglutarate-dependent dioxygenases cnsM and cnsP have still to be determined. The sequence is that of Dioxygenase cnsJ from Penicillium expansum (Blue mold rot fungus).